The primary structure comprises 767 residues: Transient receptor potential cation channel subfamily V member 6 (767 aa).

The tract at residues 1-33 (MGPLQREGRPALGDANVAPGSSPGGVWHQPQPP) is disordered. The Cytoplasmic portion of the chain corresponds to 1–366 (MGPLQREGRP…SLKWKRYGRP (366 aa)). 3 ANK repeats span residues 84 to 114 (IWES…EVHQ), 118 to 147 (MGET…ELVF), and 156 to 185 (EGQT…SVSA). Residues 133–143 (EAAMVLMEAAP) are interaction with calmodulin. 2 positions are modified to phosphotyrosine; by SRC: Tyr-201 and Tyr-202. ANK repeat units follow at residues 202 to 231 (YGEH…DIRA), 235 to 276 (LGNT…LVPN), and 278 to 307 (QGLT…HIQW). Residues 367 to 387 (YFCVLGAIYVLYIICFTMCCV) traverse the membrane as a helical segment. The Extracellular segment spans residues 388–424 (YRPLKPRITNRTNPRDNTLLQQKLLQEAYVTPKDDLR). N-linked (GlcNAc...) asparagine glycosylation is present at Asn-397. The chain crosses the membrane as a helical span at residues 425–447 (LVGELVSIVGAVIILLVEIPDIF). Topologically, residues 448 to 462 (RLGVTRFFGQTILGG) are cytoplasmic. The helical transmembrane segment at 463–482 (PFHVIIVTYAFMVLVTMVMR) threads the bilayer. Topologically, residues 483–488 (LTNSDG) are extracellular. A helical membrane pass occupies residues 489–508 (EVVPMSFALVLGWCNVMYFA). The Cytoplasmic segment spans residues 509–528 (RGFQMLGPFTIMIQKMIFGD). A helical membrane pass occupies residues 529 to 551 (LMRFCWLMAVVILGFASAFYIIF). Topologically, residues 552 to 564 (QTEDPDELGHFYD) are extracellular. Residues 565-584 (YPMALFSTFELFLTIIDGPA) constitute an intramembrane region (pore-forming). Residues 580 to 584 (IDGPA) carry the Selectivity filter motif. Residue Asp-581 participates in Ca(2+) binding. Topologically, residues 585–595 (NYDVDLPFMYS) are extracellular. The chain crosses the membrane as a helical span at residues 596 to 616 (ITYAAFAIIATLLMLNLLIAM). Topologically, residues 617 to 767 (MGDTHWRVAH…EDGEGWEYQI (151 aa)) are cytoplasmic. The interval 637 to 641 (VATTV) is interaction with S100A10. The segment at 689 to 707 (AFQQQDDLYSEDLEKDSGE) is interaction with calmodulin.

It belongs to the transient receptor (TC 1.A.4) family. TrpV subfamily. TRPV6 sub-subfamily. As to quaternary structure, homotetramer. Probably also forms heterotetramers with TRPV5. Interacts with TRPV5. Interacts with S100A10 and probably with the ANAX2-S100A10 heterotetramer. The interaction with S100A10 is required for the trafficking to the plasma membrane. Interacts with calmodulin. Interacts with BSPRY. Interacts with TCAF1 and TCAF2. In terms of processing, glycosylated. Post-translationally, phosphorylation at Tyr-201 and Tyr-202 by SRC leads to an increased calcium influx through the channel. Probably dephosphorylated at these sites by PTPN1. As to expression, expressed in duodenum, proximal jejunum, cecum, and colon.

The protein resides in the cell membrane. The catalysed reaction is Ca(2+)(in) = Ca(2+)(out). In terms of biological role, calcium selective cation channel that mediates Ca(2+) uptake in various tissues, including the intestine. Important for normal Ca(2+) ion homeostasis in the body, including bone and skin. The channel is activated by low internal calcium level, probably including intracellular calcium store depletion, and the current exhibits an inward rectification. Inactivation includes both a rapid Ca(2+)-dependent and a slower Ca(2+)-calmodulin-dependent mechanism; the latter may be regulated by phosphorylation. In vitro, is slowly inhibited by Mg(2+) in a voltage-independent manner. Heteromeric assembly with TRPV5 seems to modify channel properties. TRPV5-TRPV6 heteromultimeric concatemers exhibit voltage-dependent gating. In Rattus norvegicus (Rat), this protein is Transient receptor potential cation channel subfamily V member 6 (Trpv6).